Consider the following 338-residue polypeptide: Anthranilate phosphoribosyltransferase (338 aa).

Residues Gly78, 81 to 82 (GD), Ser86, 88 to 91 (NIST), 106 to 114 (KHGNKSITS), and Ser118 contribute to the 5-phospho-alpha-D-ribose 1-diphosphate site. Residue Gly78 coordinates anthranilate. Ser90 serves as a coordination point for Mg(2+). Asn109 provides a ligand contact to anthranilate. Arg163 contacts anthranilate. Mg(2+) contacts are provided by Asp222 and Glu223.

Belongs to the anthranilate phosphoribosyltransferase family. In terms of assembly, homodimer. Mg(2+) serves as cofactor.

It catalyses the reaction N-(5-phospho-beta-D-ribosyl)anthranilate + diphosphate = 5-phospho-alpha-D-ribose 1-diphosphate + anthranilate. Its pathway is amino-acid biosynthesis; L-tryptophan biosynthesis; L-tryptophan from chorismate: step 2/5. In terms of biological role, catalyzes the transfer of the phosphoribosyl group of 5-phosphorylribose-1-pyrophosphate (PRPP) to anthranilate to yield N-(5'-phosphoribosyl)-anthranilate (PRA). The polypeptide is Anthranilate phosphoribosyltransferase (Staphylococcus carnosus (strain TM300)).